A 299-amino-acid chain; its full sequence is N-carbamoylputrescine amidase (299 aa).

Residues 10 to 268 form the CN hydrolase domain; that stretch reads VVVSSLQFAC…EAVLVAQFDL (259 aa). Residue glutamate 49 is the Proton acceptor of the active site. Residue lysine 122 is the Proton donor of the active site. Cysteine 159 functions as the Nucleophile in the catalytic mechanism.

The protein belongs to the carbon-nitrogen hydrolase superfamily. As to quaternary structure, homooctamer (isoform 2). Expressed in roots, stems, leaves and flowers.

The enzyme catalyses N-carbamoylputrescine + H2O + 2 H(+) = putrescine + NH4(+) + CO2. The protein operates within amine and polyamine biosynthesis; putrescine biosynthesis via agmatine pathway; putrescine from N-carbamoylputrescine (amidase route): step 1/1. In terms of biological role, involved in polyamine biosynthesis. Catalyzes the hydrolysis of N-carbamoylputrescine to produce putrescine and ammonia. This Arabidopsis thaliana (Mouse-ear cress) protein is N-carbamoylputrescine amidase.